A 145-amino-acid chain; its full sequence is UPF0201 protein M164_1168 (145 aa).

Belongs to the UPF0201 family.

This Saccharolobus islandicus (strain M.16.4 / Kamchatka #3) (Sulfolobus islandicus) protein is UPF0201 protein M164_1168.